A 140-amino-acid polypeptide reads, in one-letter code: 3-hydroxyacyl-[acyl-carrier-protein] dehydratase FabZ (140 aa).

Residue His47 is part of the active site.

Belongs to the thioester dehydratase family. FabZ subfamily.

It is found in the cytoplasm. It catalyses the reaction a (3R)-hydroxyacyl-[ACP] = a (2E)-enoyl-[ACP] + H2O. In terms of biological role, involved in unsaturated fatty acids biosynthesis. Catalyzes the dehydration of short chain beta-hydroxyacyl-ACPs and long chain saturated and unsaturated beta-hydroxyacyl-ACPs. The chain is 3-hydroxyacyl-[acyl-carrier-protein] dehydratase FabZ from Streptococcus uberis (strain ATCC BAA-854 / 0140J).